Reading from the N-terminus, the 674-residue chain is Methionine--tRNA ligase (674 aa).

The short motif at Pro-12–His-22 is the 'HIGH' region element. Residues Cys-143, Cys-146, Cys-156, and Cys-159 each contribute to the Zn(2+) site. Residues Lys-328 to Ser-332 carry the 'KMSKS' region motif. ATP is bound at residue Lys-331. The 102-residue stretch at Ser-573–Lys-674 folds into the tRNA-binding domain.

The protein belongs to the class-I aminoacyl-tRNA synthetase family. MetG type 1 subfamily. Homodimer. It depends on Zn(2+) as a cofactor.

It is found in the cytoplasm. The catalysed reaction is tRNA(Met) + L-methionine + ATP = L-methionyl-tRNA(Met) + AMP + diphosphate. Its function is as follows. Is required not only for elongation of protein synthesis but also for the initiation of all mRNA translation through initiator tRNA(fMet) aminoacylation. The polypeptide is Methionine--tRNA ligase (Nitrosococcus oceani (strain ATCC 19707 / BCRC 17464 / JCM 30415 / NCIMB 11848 / C-107)).